A 348-amino-acid polypeptide reads, in one-letter code: Glucokinase (348 aa).

Position 14 to 19 (14 to 19 (GDVGGS)) interacts with ATP. The segment at 327–348 (SDPAPVAAPTHPRGGTAGDMHA) is disordered.

It belongs to the bacterial glucokinase family.

Its subcellular location is the cytoplasm. The catalysed reaction is D-glucose + ATP = D-glucose 6-phosphate + ADP + H(+). This is Glucokinase from Chromobacterium violaceum (strain ATCC 12472 / DSM 30191 / JCM 1249 / CCUG 213 / NBRC 12614 / NCIMB 9131 / NCTC 9757 / MK).